We begin with the raw amino-acid sequence, 910 residues long: Valine--tRNA ligase (910 aa).

Residues 45-55 carry the 'HIGH' region motif; sequence PNVTGSLHMGH. The 'KMSKS' region motif lies at 554–558; it reads KMSKS. Lysine 557 contributes to the ATP binding site. A coiled-coil region spans residues 842 to 910; that stretch reads DLQAEAARLA…TAESRIRDAS (69 aa).

The protein belongs to the class-I aminoacyl-tRNA synthetase family. ValS type 1 subfamily. Monomer.

Its subcellular location is the cytoplasm. The catalysed reaction is tRNA(Val) + L-valine + ATP = L-valyl-tRNA(Val) + AMP + diphosphate. Functionally, catalyzes the attachment of valine to tRNA(Val). As ValRS can inadvertently accommodate and process structurally similar amino acids such as threonine, to avoid such errors, it has a 'posttransfer' editing activity that hydrolyzes mischarged Thr-tRNA(Val) in a tRNA-dependent manner. The chain is Valine--tRNA ligase from Brucella melitensis biotype 1 (strain ATCC 23456 / CCUG 17765 / NCTC 10094 / 16M).